The primary structure comprises 665 residues: UvrABC system protein B (665 aa).

In terms of domain architecture, Helicase ATP-binding spans 25-176 (NSIEKGNRFQ…NQRQLLRDLV (152 aa)). 38 to 45 (GATGTGKT) is a binding site for ATP. Positions 91 to 114 (YYDYYQPEAYIPVSDTYIEKSASI) match the Beta-hairpin motif. Residues 429 to 595 (QVDDLLGEIK…PIVTRSSNAI (167 aa)) form the Helicase C-terminal domain. Positions 626–661 (PELIGQLEEQMKEAAKKLEFEEAAKYRDRIQHLRDK) constitute a UVR domain.

This sequence belongs to the UvrB family. Forms a heterotetramer with UvrA during the search for lesions. Interacts with UvrC in an incision complex.

The protein localises to the cytoplasm. In terms of biological role, the UvrABC repair system catalyzes the recognition and processing of DNA lesions. A damage recognition complex composed of 2 UvrA and 2 UvrB subunits scans DNA for abnormalities. Upon binding of the UvrA(2)B(2) complex to a putative damaged site, the DNA wraps around one UvrB monomer. DNA wrap is dependent on ATP binding by UvrB and probably causes local melting of the DNA helix, facilitating insertion of UvrB beta-hairpin between the DNA strands. Then UvrB probes one DNA strand for the presence of a lesion. If a lesion is found the UvrA subunits dissociate and the UvrB-DNA preincision complex is formed. This complex is subsequently bound by UvrC and the second UvrB is released. If no lesion is found, the DNA wraps around the other UvrB subunit that will check the other stand for damage. This chain is UvrABC system protein B, found in Gloeothece citriformis (strain PCC 7424) (Cyanothece sp. (strain PCC 7424)).